The chain runs to 100 residues: Cell division protein FtsB (100 aa).

Residues 1-3 lie on the Cytoplasmic side of the membrane; sequence MKQ. A helical membrane pass occupies residues 4–21; sequence LIFLLICLLSLLQYRLWL. Residues 22–100 lie on the Periplasmic side of the membrane; it reads GDNNLSEYVL…ELRERNPFNR (79 aa). A coiled-coil region spans residues 49–73; sequence RNQILKEEIIDLKRGTEAIEERARN.

The protein belongs to the FtsB family. Part of a complex composed of FtsB, FtsL and FtsQ.

It is found in the cell inner membrane. Essential cell division protein. May link together the upstream cell division proteins, which are predominantly cytoplasmic, with the downstream cell division proteins, which are predominantly periplasmic. The chain is Cell division protein FtsB from Shewanella frigidimarina (strain NCIMB 400).